The primary structure comprises 154 residues: RING finger protein 11 (154 aa).

Over residues 1–12 (MGNCLKSPTSDD) the composition is skewed to polar residues. The disordered stretch occupies residues 1–52 (MGNCLKSPTSDDISLLHESQSDRASFGEGTEPDQEPPPPYQEQVPVPIYHPT). A lipid anchor (N-myristoyl glycine) is attached at Gly-2. Cys-4 is lipidated: S-palmitoyl cysteine. Phosphoserine is present on residues Ser-14 and Ser-25. The PPxY motif signature appears at 37–40 (PPPY). Residues 99-140 (CVICMMDFVYGDPIRFLPCMHIYHLDCIDDWLMRSFTCPSCM) form an RING-type zinc finger. Thr-135 carries the post-translational modification Phosphothreonine; by PKB/AKT1.

In terms of assembly, interacts (when phosphorylated) with 14-3-3. Interacts with the E3 ubiquitin-ligases NEDD4, ITCH, SMURF2 and WWP1. Also interacts with the E2 ubiquitin-conjugating enzymes UBE2D1 and UBE2N, but neither with CDC34, nor with UBE2L3. Interacts with ZNF350, EPS15 and STAMBP. After TNF stimulation, interacts with TAX1BP1, TNFAIP3 and RIPK1; these interactions are transient and they are lost after 1 hour of stimulation with TNF. Interacts with GGA1. Post-translationally, ubiquitinated in the presence of ITCH, SMURF2 and UBE2D1, as well as WWP1. In terms of processing, phosphorylation by PKB/AKT1 may accelerate degradation by the proteasome. Acylation at both Gly-2 and Cys-4 is required for proper localization to the endosomes.

The protein localises to the early endosome. The protein resides in the recycling endosome. Its subcellular location is the cytoplasm. It is found in the nucleus. Its function is as follows. Essential component of a ubiquitin-editing protein complex, comprising also TNFAIP3, ITCH and TAX1BP1, that ensures the transient nature of inflammatory signaling pathways. Promotes the association of TNFAIP3 to RIPK1 after TNF stimulation. TNFAIP3 deubiquitinates 'Lys-63' polyubiquitin chains on RIPK1 and catalyzes the formation of 'Lys-48'-polyubiquitin chains. This leads to RIPK1 proteasomal degradation and consequently termination of the TNF- or LPS-mediated activation of NF-kappa-B. Recruits STAMBP to the E3 ubiquitin-ligase SMURF2 for ubiquitination, leading to its degradation by the 26S proteasome. The sequence is that of RING finger protein 11 (Rnf11) from Mus musculus (Mouse).